The primary structure comprises 731 residues: Zinc finger protein 615 (731 aa).

The KRAB domain maps to 8-79 (LTLEDVAVDF…EDEIYSRICS (72 aa)). 19 C2H2-type zinc fingers span residues 204-226 (HVCSECGKAFLKLSQFIDHQRVH), 232-254 (HVCSMCGKAFSRKSRLMDHQRTH), 260-282 (YECTECDKTFLKKSQLNIHQKTH), 288-310 (YTCSQCGKAFIKKCRLIYHQRTH), 316-338 (HGCSVCGKAFSTKFSLTTHQKTH), 344-366 (YICSECGKGFIEKRRLTAHHRTH), 372-394 (FICNKCGKGFTLKNSLITHQQTH), 400-422 (YTCSECGKGFSMKHCLMVHQRTH), 428-450 (YKCNECGKGFALKSPLIRHQRTH), 456-478 (YVCTECRKGFTMKSDLIVHQRTH), 484-506 (YICNDCGKGFTVKSRLIVHQRTH), 512-534 (YVCGECGKGFPAKIRLMGHQRTH), 540-562 (YICNECGKGFTEKSHLNVHRRTH), 568-590 (YVCSECGKGLTGKSMLIAHQRTH), 596-618 (YICNECGKGFTMKSTLSIHQQTH), 624-646 (YKCNECDKTFRKKTCLIQHQRFH), 652-674 (FACTECGKFSLRKNDLITHQRIH), 680-702 (YKCSDCGKAFTTKSGLNVHQRKH), and 708-730 (YGCSDCGKAFAHLSILVKHRRIH).

This sequence belongs to the krueppel C2H2-type zinc-finger protein family.

The protein resides in the nucleus. Its function is as follows. May be involved in transcriptional regulation. This is Zinc finger protein 615 (ZNF615) from Homo sapiens (Human).